Reading from the N-terminus, the 222-residue chain is MKPSADHPWPVDLGEARVIQERIRAQVITCDAFGPIRTVAGVDAGYSGDSALAAVVVLAFPSLQALDYAVARRQISFPYVPGYLSFREAPAVLDALASLRITPDLLMCDGHGLAHPRRCGIACHLGVLTDLPSIGCAKSVLVGAHDPLPDVRGAWTPLRHDDEIVGAALRTRPGVRPVYVSVGHRVSLETAIQFVMACVTRYRLPETTRAADALASQGRIPR.

Residues Asp43 and Asp109 each contribute to the Mg(2+) site.

The protein belongs to the endonuclease V family. The cofactor is Mg(2+).

The protein localises to the cytoplasm. It catalyses the reaction Endonucleolytic cleavage at apurinic or apyrimidinic sites to products with a 5'-phosphate.. Its function is as follows. DNA repair enzyme involved in the repair of deaminated bases. Selectively cleaves double-stranded DNA at the second phosphodiester bond 3' to a deoxyinosine leaving behind the intact lesion on the nicked DNA. In Roseiflexus castenholzii (strain DSM 13941 / HLO8), this protein is Endonuclease V.